A 200-amino-acid polypeptide reads, in one-letter code: Holliday junction branch migration complex subunit RuvA (200 aa).

Residues 1–63 (MIALLTGQIA…EDAILLYGFR (63 aa)) form a domain I region. Residues 64–142 (TRTEKSFFQL…KLDSGSIPAG (79 aa)) form a domain II region. Residues 143–153 (DAVGRSLPAGS) are flexible linker. The domain III stretch occupies residues 153 to 200 (SVLDDVSSALVNLGYKDPQVRKVLAELDCAGSASVEEVLKQALKILMK).

Belongs to the RuvA family. In terms of assembly, homotetramer. Forms an RuvA(8)-RuvB(12)-Holliday junction (HJ) complex. HJ DNA is sandwiched between 2 RuvA tetramers; dsDNA enters through RuvA and exits via RuvB. An RuvB hexamer assembles on each DNA strand where it exits the tetramer. Each RuvB hexamer is contacted by two RuvA subunits (via domain III) on 2 adjacent RuvB subunits; this complex drives branch migration. In the full resolvosome a probable DNA-RuvA(4)-RuvB(12)-RuvC(2) complex forms which resolves the HJ.

It localises to the cytoplasm. Functionally, the RuvA-RuvB-RuvC complex processes Holliday junction (HJ) DNA during genetic recombination and DNA repair, while the RuvA-RuvB complex plays an important role in the rescue of blocked DNA replication forks via replication fork reversal (RFR). RuvA specifically binds to HJ cruciform DNA, conferring on it an open structure. The RuvB hexamer acts as an ATP-dependent pump, pulling dsDNA into and through the RuvAB complex. HJ branch migration allows RuvC to scan DNA until it finds its consensus sequence, where it cleaves and resolves the cruciform DNA. This chain is Holliday junction branch migration complex subunit RuvA, found in Trichlorobacter lovleyi (strain ATCC BAA-1151 / DSM 17278 / SZ) (Geobacter lovleyi).